The chain runs to 436 residues: Enolase (436 aa).

Gln-163 serves as a coordination point for (2R)-2-phosphoglycerate. The active-site Proton donor is the Glu-205. Residues Asp-242, Glu-285, and Asp-312 each contribute to the Mg(2+) site. The (2R)-2-phosphoglycerate site is built by Lys-337, Arg-366, Ser-367, and Lys-388. Lys-337 serves as the catalytic Proton acceptor.

Belongs to the enolase family. The cofactor is Mg(2+).

It is found in the cytoplasm. The protein resides in the secreted. The protein localises to the cell surface. It catalyses the reaction (2R)-2-phosphoglycerate = phosphoenolpyruvate + H2O. It functions in the pathway carbohydrate degradation; glycolysis; pyruvate from D-glyceraldehyde 3-phosphate: step 4/5. Catalyzes the reversible conversion of 2-phosphoglycerate (2-PG) into phosphoenolpyruvate (PEP). It is essential for the degradation of carbohydrates via glycolysis. The polypeptide is Enolase (Solidesulfovibrio magneticus (strain ATCC 700980 / DSM 13731 / RS-1) (Desulfovibrio magneticus)).